A 499-amino-acid polypeptide reads, in one-letter code: Proline--tRNA ligase (499 aa).

This sequence belongs to the class-II aminoacyl-tRNA synthetase family. ProS type 3 subfamily. In terms of assembly, homodimer.

Its subcellular location is the cytoplasm. It carries out the reaction tRNA(Pro) + L-proline + ATP = L-prolyl-tRNA(Pro) + AMP + diphosphate. Catalyzes the attachment of proline to tRNA(Pro) in a two-step reaction: proline is first activated by ATP to form Pro-AMP and then transferred to the acceptor end of tRNA(Pro). This is Proline--tRNA ligase from Bdellovibrio bacteriovorus (strain ATCC 15356 / DSM 50701 / NCIMB 9529 / HD100).